A 946-amino-acid polypeptide reads, in one-letter code: Bifunctional glutamine synthetase adenylyltransferase/adenylyl-removing enzyme (946 aa).

Positions 1 to 440 (MKPLSSPLQQ…VFNELIGDDE (440 aa)) are adenylyl removase. Positions 449–946 (SEQWRELWQD…ASWQKWLVEE (498 aa)) are adenylyl transferase.

The protein belongs to the GlnE family. It depends on Mg(2+) as a cofactor.

The catalysed reaction is [glutamine synthetase]-O(4)-(5'-adenylyl)-L-tyrosine + phosphate = [glutamine synthetase]-L-tyrosine + ADP. It catalyses the reaction [glutamine synthetase]-L-tyrosine + ATP = [glutamine synthetase]-O(4)-(5'-adenylyl)-L-tyrosine + diphosphate. Involved in the regulation of glutamine synthetase GlnA, a key enzyme in the process to assimilate ammonia. When cellular nitrogen levels are high, the C-terminal adenylyl transferase (AT) inactivates GlnA by covalent transfer of an adenylyl group from ATP to specific tyrosine residue of GlnA, thus reducing its activity. Conversely, when nitrogen levels are low, the N-terminal adenylyl removase (AR) activates GlnA by removing the adenylyl group by phosphorolysis, increasing its activity. The regulatory region of GlnE binds the signal transduction protein PII (GlnB) which indicates the nitrogen status of the cell. The polypeptide is Bifunctional glutamine synthetase adenylyltransferase/adenylyl-removing enzyme (Escherichia coli O81 (strain ED1a)).